A 305-amino-acid polypeptide reads, in one-letter code: Cytochrome c biogenesis protein CcsA (305 aa).

8 helical membrane passes run 13–33 (IYFSFILVITLVFGGTLVYPV), 42–62 (KGIIFPFFCITLNLIIRWFYS), 70–90 (LYESLMFFSWNFCLIPFFIDI), 97–117 (WIGVITAPSALFTHAFATLIL), 135–155 (WLIMHVTIIFLGYVTLLCGSL), 212–232 (YTIVIGFTFLTIGILSGAVWA), 242–262 (WDPKEIWALITWLIFANYIHI), and 276–296 (VASLGLFFVWICYFGVNILGI).

This sequence belongs to the CcmF/CycK/Ccl1/NrfE/CcsA family. As to quaternary structure, may interact with Ccs1.

It localises to the plastid. Its subcellular location is the chloroplast thylakoid membrane. Required during biogenesis of c-type cytochromes (cytochrome c6 and cytochrome f) at the step of heme attachment. The protein is Cytochrome c biogenesis protein CcsA of Welwitschia mirabilis (Tree tumbo).